Reading from the N-terminus, the 371-residue chain is T-cell acute lymphocytic leukemia protein 1 (371 aa).

Residues 1 to 71 form a disordered region; that stretch reads MMEKRQPELC…DVPLQNSSNG (71 aa). Positions 34 to 57 are enriched in basic and acidic residues; sequence GCKEDEESKREEGDKEGGGRFKGD. Residues 204-256 enclose the bHLH domain; the sequence is VRRIFTNSRERWRQQNVNGAFAELRKLIPTHPPDKKLSKNEILRLAMKYISFL. Positions 263–371 are disordered; sequence QDGGRNVSST…GRPLDGSSRR (109 aa). The segment covering 293 to 305 has biased composition (basic and acidic residues); sequence HQDRVVGLARDDI. Over residues 321 to 335 the composition is skewed to acidic residues; that stretch reads GDADGSPESFMEDQD.

As to expression, expressed in the main hemopoietic organs in adults, namely the kidney and the spleen. Also expressed in the liver, brain, gill and gonads.

The protein resides in the nucleus. In terms of biological role, transcription factor that plays a pivotal role in hemopoietic and endothelial development. This is T-cell acute lymphocytic leukemia protein 1 from Takifugu rubripes (Japanese pufferfish).